Reading from the N-terminus, the 165-residue chain is MQSMKDAAASAKAGMEKAKASMQEKVDQMKTRDPNEKEMARERKEERQEDAELRKQEARHHNATAGHVGGGGIGGTGYTTAGYNIGDTGGYGGTGGHDNRGYPTAGSGYDTGRQDDLSSMGFGGDTEGAYGTTGNQDFPNAASNNAGTRRNTRGGTQDDPYYRSY.

Residues Met1 to Ala13 show a composition bias toward low complexity. Disordered stretches follow at residues Met1 to Thr76 and Gly92 to Tyr165. The segment covering Gly14–His60 has biased composition (basic and acidic residues). Gly residues predominate over residues His67–Thr76. Residues Thr132 to Gly155 show a composition bias toward polar residues.

Belongs to the LEA type 1 family.

In terms of biological role, LEA proteins are late embryonic proteins abundant in higher plant seed embryos. There are two subsets of LEA proteins (5a and 5b), the first ones are expressed when the cotyledon weight reach 80 mg and the second set are expressed above 100 mg. The function of those proteins is not known. This Gossypium hirsutum (Upland cotton) protein is Late embryogenesis abundant protein D-113.